A 534-amino-acid chain; its full sequence is Fimbrial subunit type 2 (534 aa).

An N-terminal signal peptide occupies residues 1–32 (MKYNTSTLGRRAAAAAGVLTLAVLGLAPMAQA). Disordered stretches follow at residues 56–76 (GDGN…GKGA) and 329–376 (TYAE…DKDG). A compositionally biased stretch (pro residues) spans 334–347 (PPAPETPPANPDNP). Residues 361–376 (TIKKVDGNDRSGDKDG) are compositionally biased toward basic and acidic residues. Residues 492–496 (LPLTG) carry the LPXTG sorting signal motif. Threonine 495 is modified (pentaglycyl murein peptidoglycan amidated threonine). The propeptide at 496–534 (GANGMLILTASGAALLMIAVGSVLVARYRERKRNRDLAA) is removed by sortase.

The protein resides in the secreted. Its subcellular location is the cell wall. The protein localises to the fimbrium. Its function is as follows. Major fimbrial subunit of A.naeslundii. The polypeptide is Fimbrial subunit type 2 (Actinomyces naeslundii).